The following is a 932-amino-acid chain: 3-hydroxy-3-methylglutaryl-coenzyme A reductase (932 aa).

6 helical membrane passes run 20–40 (VIVC…FTGL), 59–79 (LSSD…YLYL), 92–112 (ILGI…SAVI), 113–133 (HLFG…LLLI), 162–182 (MAIL…VISI), and 193–213 (VFCC…MTFF). N-linked (GlcNAc...) asparagine glycosylation is present at Asn-279. A helical transmembrane segment spans residues 322 to 342 (ILTAILATVLASHYIFFSDLA). Residues 343-467 (TYPEKRVSIM…APRPMPELLE (125 aa)) are linker. Over residues 357–367 (VVNPGSDHEDA) the composition is skewed to basic and acidic residues. Residues 357 to 442 (VVNPGSDHED…SGSEDEEEEV (86 aa)) form a disordered region. Over residues 374 to 403 (GTLSSSPSTSDVRVIESMTSRTQACQTDPV) the composition is skewed to polar residues. Positions 406-421 (SPRNSRSSSPVSSHSV) are enriched in low complexity. Positions 468–932 (ILNVGKGPNA…APGTCTANAS (465 aa)) are catalytic. Catalysis depends on charge relay system residues Glu-575, Lys-707, and Asp-783. Asn-850 is a glycosylation site (N-linked (GlcNAc...) asparagine). His-882 serves as the catalytic Proton donor. An N-linked (GlcNAc...) asparagine glycan is attached at Asn-886. Phosphoserine; by AMPK is present on Ser-888.

Belongs to the HMG-CoA reductase family.

The protein localises to the endoplasmic reticulum membrane. It catalyses the reaction (R)-mevalonate + 2 NADP(+) + CoA = (3S)-3-hydroxy-3-methylglutaryl-CoA + 2 NADPH + 2 H(+). The protein operates within metabolic intermediate biosynthesis; (R)-mevalonate biosynthesis; (R)-mevalonate from acetyl-CoA: step 3/3. In terms of biological role, this transmembrane glycoprotein is involved in the control of cholesterol biosynthesis. It is the rate-limiting enzyme of sterol biosynthesis. In Strongylocentrotus purpuratus (Purple sea urchin), this protein is 3-hydroxy-3-methylglutaryl-coenzyme A reductase (HMGCR).